We begin with the raw amino-acid sequence, 445 residues long: C-terminal-binding protein 2 (445 aa).

Arg22 is subject to Asymmetric dimethylarginine. Residues Ser106, 186-191, Asp210, 243-249, 270-272, and Asp296 contribute to the NAD(+) site; these read IGFGRT, CNLNEHN, and AAR. Arg272 is an active-site residue. Glu301 is an active-site residue. His321 functions as the Proton donor in the catalytic mechanism. 321–324 is a binding site for NAD(+); that stretch reads HTAW. Positions 414-445 are disordered; sequence THNLPTVAHPSQAPSPNQPTKHGDNREHPNEQ. Ser428 is subject to Phosphoserine; by HIPK2. The segment covering 434-445 has biased composition (basic and acidic residues); sequence KHGDNREHPNEQ.

It belongs to the D-isomer specific 2-hydroxyacid dehydrogenase family. Interacts with HIPK2, ZNF217 and PNN. Interacts with the transcription factors BKLF, delta EF1/AREB6/ZEB, EVI-1 and Friend of GATA (FOG) via the consensus motif P-X-[DNS]-L-[STVA]. Can form a complex with BKLF on a CACCC-box oligonucleotide. Can form homodimers or heterodimers of CTBP1 and CTBP2. Interacts with NRIP1 and WIZ. Interacts with PRDM16; represses white adipose tissue (WAT)-specific genes expression. Interacts with MCRIP1. In terms of processing, phosphorylation by HIPK2 on Ser-428 induces proteasomal degradation. Isoform 2 is specifically localized in synaptic ribbon (at protein level).

The protein resides in the nucleus. It localises to the synapse. Its function is as follows. Corepressor targeting diverse transcription regulators. Functions in brown adipose tissue (BAT) differentiation. Isoform 2 probably acts as a scaffold for specialized synapses. The chain is C-terminal-binding protein 2 (Ctbp2) from Rattus norvegicus (Rat).